The sequence spans 194 residues: Lymphocyte antigen 6 complex locus protein G5b (194 aa).

An N-terminal signal peptide occupies residues 1 to 18; that stretch reads MRACVLVHVLTMVGFALG. Residues 26–118 enclose the UPAR/Ly6 domain; sequence RTCHLCFLED…SAQHQSTLPG (93 aa). Intrachain disulfides connect Cys-28–Cys-55, Cys-31–Cys-40, Cys-47–Cys-73, Cys-81–Cys-98, and Cys-99–Cys-104. A glycan (N-linked (GlcNAc...) asparagine) is linked at Asn-182.

In terms of processing, N-glycosylated.

Its subcellular location is the secreted. This Rattus norvegicus (Rat) protein is Lymphocyte antigen 6 complex locus protein G5b (Ly6g5b).